We begin with the raw amino-acid sequence, 462 residues long: Cysteine--tRNA ligase (462 aa).

Cys28 lines the Zn(2+) pocket. A 'HIGH' region motif is present at residues 30-40 (ITVYDLCHIGH). Zn(2+) contacts are provided by Cys210, His235, and Glu239. The 'KMSKS' region motif lies at 267–271 (KMSKS). Lys270 contacts ATP.

The protein belongs to the class-I aminoacyl-tRNA synthetase family. In terms of assembly, monomer. The cofactor is Zn(2+).

It is found in the cytoplasm. The enzyme catalyses tRNA(Cys) + L-cysteine + ATP = L-cysteinyl-tRNA(Cys) + AMP + diphosphate. The sequence is that of Cysteine--tRNA ligase from Erwinia tasmaniensis (strain DSM 17950 / CFBP 7177 / CIP 109463 / NCPPB 4357 / Et1/99).